The chain runs to 422 residues: Putidaredoxin reductase CamA (422 aa).

Residues A15, D37, K50, V83, and R134 each coordinate FAD. 156 to 165 contributes to the NAD(+) binding site; it reads GGGYIGLEVA. Residues D284 and V302 each coordinate FAD.

The protein belongs to the FAD-dependent oxidoreductase family. In terms of assembly, homodimer or monomer. FAD serves as cofactor.

The catalysed reaction is 2 reduced [2Fe-2S]-[putidaredoxin] + NAD(+) + H(+) = 2 oxidized [2Fe-2S]-[putidaredoxin] + NADH. Its pathway is terpene metabolism; (R)-camphor degradation. In terms of biological role, the oxidation of camphor by cytochrome P450-CAM CamC requires the participation of the flavoprotein, putidaredoxin reductase CamA, and the iron-sulfur protein, putidaredoxin CamB, to mediate the transfer of electrons from NADH to P450 for oxygen activation. The polypeptide is Putidaredoxin reductase CamA (Pseudomonas putida (Arthrobacter siderocapsulatus)).